A 168-amino-acid polypeptide reads, in one-letter code: Phosphopantetheine adenylyltransferase (168 aa).

S9 provides a ligand contact to substrate. ATP-binding positions include 9–10 and H17; that span reads SF. Residues K41, L73, and R87 each contribute to the substrate site. ATP contacts are provided by residues 88–90, E98, and 123–129; these read GLR and YAFLSSS.

It belongs to the bacterial CoaD family. In terms of assembly, homohexamer. It depends on Mg(2+) as a cofactor.

The protein resides in the cytoplasm. It catalyses the reaction (R)-4'-phosphopantetheine + ATP + H(+) = 3'-dephospho-CoA + diphosphate. It functions in the pathway cofactor biosynthesis; coenzyme A biosynthesis; CoA from (R)-pantothenate: step 4/5. Its function is as follows. Reversibly transfers an adenylyl group from ATP to 4'-phosphopantetheine, yielding dephospho-CoA (dPCoA) and pyrophosphate. The chain is Phosphopantetheine adenylyltransferase from Heliobacterium modesticaldum (strain ATCC 51547 / Ice1).